The sequence spans 30 residues: U5-ctenitoxin-Pk1b (30 aa).

2 disulfide bridges follow: cysteine 6-cysteine 23 and cysteine 13-cysteine 29.

Belongs to the neurotoxin 04 (omega-agtx) family. 02 (Tx1) subfamily. Expressed by the venom gland.

It is found in the secreted. In terms of biological role, lethal neurotoxin. Causes spastic paralysis and death in mice in 4-6 minutes after intracerebroventricular injection at dose levels of 1.5 ug per mouse. The sequence is that of U5-ctenitoxin-Pk1b from Phoneutria keyserlingi (Brazilian wandering spider).